Consider the following 389-residue polypeptide: Nuclear receptor subfamily 2 group F member 1-B (389 aa).

The tract at residues 19-39 (DDQSAAGREHLQHRHSPKSAE) is disordered. Positions 51 to 126 (HVECVVCGDK…VGMRREAVQR (76 aa)) form a DNA-binding region, nuclear receptor. NR C4-type zinc fingers lie at residues 54 to 74 (CVVC…CEGC) and 90 to 109 (CRAN…CQYC). An NR LBD domain is found at 152 to 378 (YLSGYISLLL…TLIRDMLLSG (227 aa)).

This sequence belongs to the nuclear hormone receptor family. NR2 subfamily. In terms of tissue distribution, expressed the retina, where expression is restricted to the outer nuclear layer.

It is found in the nucleus. Putative transcription factor that is required in photoreceptor cells precursors during eye development. This chain is Nuclear receptor subfamily 2 group F member 1-B, found in Danio rerio (Zebrafish).